The sequence spans 201 residues: Holliday junction branch migration complex subunit RuvA (201 aa).

The tract at residues 1 to 63 is domain I; it reads MYDYIKGTVT…EDNISLFGFQ (63 aa). Residues 64–142 are domain II; sequence TTEERYLFKK…DVVASEIVYV (79 aa). Residues 143 to 153 form a flexible linker region; it reads APENDMVAGLS. The tract at residues 153–201 is domain III; that stretch reads SPQLEEAVLALEALGYSTRELKKVIPKLSKEEDLTSDAYIKLALQLMTK.

It belongs to the RuvA family. Homotetramer. Forms an RuvA(8)-RuvB(12)-Holliday junction (HJ) complex. HJ DNA is sandwiched between 2 RuvA tetramers; dsDNA enters through RuvA and exits via RuvB. An RuvB hexamer assembles on each DNA strand where it exits the tetramer. Each RuvB hexamer is contacted by two RuvA subunits (via domain III) on 2 adjacent RuvB subunits; this complex drives branch migration. In the full resolvosome a probable DNA-RuvA(4)-RuvB(12)-RuvC(2) complex forms which resolves the HJ.

It localises to the cytoplasm. Functionally, the RuvA-RuvB-RuvC complex processes Holliday junction (HJ) DNA during genetic recombination and DNA repair, while the RuvA-RuvB complex plays an important role in the rescue of blocked DNA replication forks via replication fork reversal (RFR). RuvA specifically binds to HJ cruciform DNA, conferring on it an open structure. The RuvB hexamer acts as an ATP-dependent pump, pulling dsDNA into and through the RuvAB complex. HJ branch migration allows RuvC to scan DNA until it finds its consensus sequence, where it cleaves and resolves the cruciform DNA. This Listeria monocytogenes serotype 4b (strain CLIP80459) protein is Holliday junction branch migration complex subunit RuvA.